The primary structure comprises 490 residues: GTPase Der (490 aa).

EngA-type G domains lie at 3 to 166 (PVVA…AEAM) and 200 to 373 (IKLA…DSAT). GTP-binding positions include 9 to 16 (GRPNVGKS), 56 to 60 (DTGGI), 118 to 121 (NKVD), 206 to 213 (GKPNVGKS), 253 to 257 (DTAGV), and 318 to 321 (NKWD). The region spanning 374–458 (RRVSTSMLTR…PIQLRFQEGG (85 aa)) is the KH-like domain.

This sequence belongs to the TRAFAC class TrmE-Era-EngA-EngB-Septin-like GTPase superfamily. EngA (Der) GTPase family. In terms of assembly, associates with the 50S ribosomal subunit.

GTPase that plays an essential role in the late steps of ribosome biogenesis. The sequence is that of GTPase Der from Shewanella halifaxensis (strain HAW-EB4).